A 169-amino-acid chain; its full sequence is GSK-3-binding protein (169 aa).

Positions 75–100 (TPRGAARHAQHHHHHSPRQQGTGGNK) are disordered. Positions 79–91 (AARHAQHHHHHSP) are enriched in basic residues. Residues 122 to 145 (DDPHELLQELLLSGNLIKEAVRRL) form an involved in GSK-3 binding region. The interval 147 to 169 (MAGESPDPPGSRRVSECTETTVQ) is disordered.

It belongs to the GSK-3-binding protein family.

Functionally, binds GSK-3 and prevents GSK-3-dependent phosphorylation. Regulates the stability of beta-catenin in embryos. Maternal GBP is required for dorsal-ventral axis formation. In Xenopus laevis (African clawed frog), this protein is GSK-3-binding protein (gbp).